The chain runs to 271 residues: uncharacterized protein (271 aa).

This is an uncharacterized protein from Azospirillum brasilense.